A 464-amino-acid polypeptide reads, in one-letter code: UDP-N-acetylmuramoylalanine--D-glutamate ligase (464 aa).

112–118 (GTDGKTT) serves as a coordination point for ATP.

It belongs to the MurCDEF family.

The protein resides in the cytoplasm. The catalysed reaction is UDP-N-acetyl-alpha-D-muramoyl-L-alanine + D-glutamate + ATP = UDP-N-acetyl-alpha-D-muramoyl-L-alanyl-D-glutamate + ADP + phosphate + H(+). It participates in cell wall biogenesis; peptidoglycan biosynthesis. Functionally, cell wall formation. Catalyzes the addition of glutamate to the nucleotide precursor UDP-N-acetylmuramoyl-L-alanine (UMA). The protein is UDP-N-acetylmuramoylalanine--D-glutamate ligase of Pelodictyon phaeoclathratiforme (strain DSM 5477 / BU-1).